The sequence spans 388 residues: Succinate--CoA ligase [ADP-forming] subunit beta (388 aa).

Residues 9-244 (KQLFAEYGLP…PSQEDEREAH (236 aa)) form the ATP-grasp domain. ATP-binding positions include lysine 46, 53–55 (GRG), glutamate 99, threonine 102, and glutamate 107. 2 residues coordinate Mg(2+): asparagine 199 and aspartate 213. Substrate-binding positions include asparagine 264 and 321 to 323 (GIV).

Belongs to the succinate/malate CoA ligase beta subunit family. In terms of assembly, heterotetramer of two alpha and two beta subunits. Requires Mg(2+) as cofactor.

The enzyme catalyses succinate + ATP + CoA = succinyl-CoA + ADP + phosphate. It catalyses the reaction GTP + succinate + CoA = succinyl-CoA + GDP + phosphate. The protein operates within carbohydrate metabolism; tricarboxylic acid cycle; succinate from succinyl-CoA (ligase route): step 1/1. Functionally, succinyl-CoA synthetase functions in the citric acid cycle (TCA), coupling the hydrolysis of succinyl-CoA to the synthesis of either ATP or GTP and thus represents the only step of substrate-level phosphorylation in the TCA. The beta subunit provides nucleotide specificity of the enzyme and binds the substrate succinate, while the binding sites for coenzyme A and phosphate are found in the alpha subunit. This Marinomonas sp. (strain MWYL1) protein is Succinate--CoA ligase [ADP-forming] subunit beta.